Reading from the N-terminus, the 883-residue chain is Alanine--tRNA ligase (883 aa).

4 residues coordinate Zn(2+): His-563, His-567, Cys-677, and His-681.

Belongs to the class-II aminoacyl-tRNA synthetase family. Requires Zn(2+) as cofactor.

The protein localises to the cytoplasm. The enzyme catalyses tRNA(Ala) + L-alanine + ATP = L-alanyl-tRNA(Ala) + AMP + diphosphate. Catalyzes the attachment of alanine to tRNA(Ala) in a two-step reaction: alanine is first activated by ATP to form Ala-AMP and then transferred to the acceptor end of tRNA(Ala). Also edits incorrectly charged Ser-tRNA(Ala) and Gly-tRNA(Ala) via its editing domain. This is Alanine--tRNA ligase from Cereibacter sphaeroides (strain ATCC 17025 / ATH 2.4.3) (Rhodobacter sphaeroides).